A 592-amino-acid chain; its full sequence is Ferric-chelate reductase 1 (592 aa).

The helical transmembrane segment at 2 to 22 (AVSGFTLGTCILLLHISYVAN) threads the bilayer. Residues 13-179 (LLLHISYVAN…FTTPKATVVP (167 aa)) form the Reelin domain. N-linked (GlcNAc...) asparagine glycans are attached at residues Asn-138, Asn-308, and Asn-321. Residues 216-331 (EASCVFLSFT…TSYYIFLADG (116 aa)) enclose the DOMON domain. One can recognise a Cytochrome b561 domain in the interval 335–534 (DGRIYKHSQQ…VGTEVVLEVH (200 aa)). A helical membrane pass occupies residues 372 to 392 (VHGALMFVAWMTTVSIGVLVA). Residues His-373 and His-414 each contribute to the heme b site. 2 helical membrane passes run 415–435 (RMLMFTTTVLTCIAFVMPFIY) and 446–466 (HPYLGCIVMTLAVLQPLLAVF). Heme b contacts are provided by His-446 and His-482. 3 helical membrane-spanning segments follow: residues 491 to 511 (IIAVAAMFLGMDLPGLNLPDS), 515 to 535 (YAMTGFVAWHVGTEVVLEVHA), and 569 to 589 (AVLAIYVCGNVTFLIIFLSAI).

Belongs to the FRRS1 family. Heme b is required as a cofactor.

Its subcellular location is the membrane. In terms of biological role, ferric-chelate reductases reduce Fe(3+) to Fe(2+) before its transport from the endosome to the cytoplasm. This Homo sapiens (Human) protein is Ferric-chelate reductase 1 (FRRS1).